The sequence spans 390 residues: Acetylornithine aminotransferase (390 aa).

Pyridoxal 5'-phosphate-binding positions include 103–104 (GT) and phenylalanine 129. Arginine 132 serves as a coordination point for N(2)-acetyl-L-ornithine. Residue 214–217 (DEVQ) participates in pyridoxal 5'-phosphate binding. Position 243 is an N6-(pyridoxal phosphate)lysine (lysine 243). Serine 271 is a N(2)-acetyl-L-ornithine binding site. Pyridoxal 5'-phosphate is bound at residue threonine 272. Lysine 304 is covalently cross-linked (Isoglutamyl lysine isopeptide (Lys-Gln) (interchain with Q-Cter in protein Pup)).

It belongs to the class-III pyridoxal-phosphate-dependent aminotransferase family. ArgD subfamily. As to quaternary structure, homodimer. Pyridoxal 5'-phosphate is required as a cofactor.

The protein resides in the cytoplasm. The catalysed reaction is N(2)-acetyl-L-ornithine + 2-oxoglutarate = N-acetyl-L-glutamate 5-semialdehyde + L-glutamate. Its pathway is amino-acid biosynthesis; L-arginine biosynthesis; N(2)-acetyl-L-ornithine from L-glutamate: step 4/4. This Mycolicibacterium smegmatis (strain ATCC 700084 / mc(2)155) (Mycobacterium smegmatis) protein is Acetylornithine aminotransferase.